A 235-amino-acid chain; its full sequence is ATP-dependent Clp protease proteolytic subunit (235 aa).

S123 serves as the catalytic Nucleophile. H148 is a catalytic residue.

The protein belongs to the peptidase S14 family. In terms of assembly, fourteen ClpP subunits assemble into 2 heptameric rings which stack back to back to give a disk-like structure with a central cavity, resembling the structure of eukaryotic proteasomes.

Its subcellular location is the cytoplasm. The enzyme catalyses Hydrolysis of proteins to small peptides in the presence of ATP and magnesium. alpha-casein is the usual test substrate. In the absence of ATP, only oligopeptides shorter than five residues are hydrolyzed (such as succinyl-Leu-Tyr-|-NHMec, and Leu-Tyr-Leu-|-Tyr-Trp, in which cleavage of the -Tyr-|-Leu- and -Tyr-|-Trp bonds also occurs).. Cleaves peptides in various proteins in a process that requires ATP hydrolysis. Has a chymotrypsin-like activity. Plays a major role in the degradation of misfolded proteins. The polypeptide is ATP-dependent Clp protease proteolytic subunit (Novosphingobium aromaticivorans (strain ATCC 700278 / DSM 12444 / CCUG 56034 / CIP 105152 / NBRC 16084 / F199)).